The following is a 424-amino-acid chain: Glutamyl-tRNA reductase (424 aa).

Residues 49 to 52, Ser105, 110 to 112, and Gln116 each bind substrate; these read TCNR and EPQ. Cys50 functions as the Nucleophile in the catalytic mechanism. 185–190 serves as a coordination point for NADP(+); that stretch reads GSGETA.

Belongs to the glutamyl-tRNA reductase family. In terms of assembly, homodimer.

It carries out the reaction (S)-4-amino-5-oxopentanoate + tRNA(Glu) + NADP(+) = L-glutamyl-tRNA(Glu) + NADPH + H(+). It participates in porphyrin-containing compound metabolism; protoporphyrin-IX biosynthesis; 5-aminolevulinate from L-glutamyl-tRNA(Glu): step 1/2. Functionally, catalyzes the NADPH-dependent reduction of glutamyl-tRNA(Glu) to glutamate 1-semialdehyde (GSA). This chain is Glutamyl-tRNA reductase, found in Legionella pneumophila (strain Corby).